Consider the following 348-residue polypeptide: (+)-germacrene D synthase (348 aa).

Asp97, Asp101, Asn242, and Ser246 together coordinate Mg(2+). The DDXXD motif signature appears at 97-101 (DDILD).

It belongs to the terpene synthase family. The cofactor is Mg(2+).

The catalysed reaction is (2E,6E)-farnesyl diphosphate = (+)-germacrene D + diphosphate. The protein operates within secondary metabolite biosynthesis; terpenoid biosynthesis. Sesquiterpene synthase converting farnesyl diphosphate to eight sesquiterpenes, with (+)-germacrene D and an unidentified oxygenated sesquiterpene as the major products. Has no diterpene synthase activity. The polypeptide is (+)-germacrene D synthase (Selaginella moellendorffii (Spikemoss)).